The sequence spans 828 residues: Periplasmic nitrate reductase (828 aa).

The tat-type signal signal peptide spans 1–31 (MKLSRRSFMKANAVAAAAAAAGLSVPGVARA). In terms of domain architecture, 4Fe-4S Mo/W bis-MGD-type spans 39 to 95 (IKWDKAPCRFCGTGCGVLVGTQQGRVVACQGDPDAPVNRGLNCIKGYFLPKIMYGKD). C46, C49, C53, and C81 together coordinate [4Fe-4S] cluster. Mo-bis(molybdopterin guanine dinucleotide) is bound by residues K83, Q150, N175, C179, 212-219 (WGSNMAEM), 243-247 (STFQH), 262-264 (QSD), M372, Q376, N482, 508-509 (SD), K531, D558, and 718-727 (TGRVLEHWHT). Residue F794 coordinates substrate. Mo-bis(molybdopterin guanine dinucleotide)-binding residues include N802 and K819.

The protein belongs to the prokaryotic molybdopterin-containing oxidoreductase family. NasA/NapA/NarB subfamily. As to quaternary structure, component of the periplasmic nitrate reductase NapAB complex composed of NapA and NapB. The cofactor is [4Fe-4S] cluster. It depends on Mo-bis(molybdopterin guanine dinucleotide) as a cofactor. Predicted to be exported by the Tat system. The position of the signal peptide cleavage has not been experimentally proven.

It is found in the periplasm. It carries out the reaction 2 Fe(II)-[cytochrome] + nitrate + 2 H(+) = 2 Fe(III)-[cytochrome] + nitrite + H2O. Catalytic subunit of the periplasmic nitrate reductase complex NapAB. Receives electrons from NapB and catalyzes the reduction of nitrate to nitrite. The sequence is that of Periplasmic nitrate reductase from Salmonella dublin (strain CT_02021853).